We begin with the raw amino-acid sequence, 211 residues long: Synaptosomal-associated protein 23 (211 aa).

N-acetylmethionine is present on M1. Phosphoserine is present on residues S5, S6, S20, S23, and S34. Residues 14–76 (HQITDESLES…RETEKTLTEL (63 aa)) form the t-SNARE coiled-coil homology 1 domain. Residues 23–76 (STRRILGLAIESQDAGIKTITMLDEQKEQLNRIEEGLDQINKDMRETEKTLTEL) are a coiled coil. Residues C79, C80, C83, C85, and C87 are each lipidated (S-palmitoyl cysteine). S110 carries the phosphoserine modification. Residue C112 is the site of S-palmitoyl cysteine attachment. Positions 146 to 208 (DAREDEMEEN…DIANARAKKL (63 aa)) constitute a t-SNARE coiled-coil homology 2 domain. Position 161 is a phosphoserine (S161).

Belongs to the SNAP-25 family. Homotetramer (via coiled-coil domain), also forms heterotetramers with STX4 and VAMP3. Found in a complex with VAMP8 and STX1A. Found in a complex with VAMP8 and STX4 in pancreas. Interacts simultaneously with SNAPIN and SYN4. Interacts with STX1A. Interacts with STX12. Interacts tightly to multiple syntaxins and synaptobrevins/VAMPs. Interacts with ZDHHC13 (via ANK repeats). Interacts with ZDHHC17 (via ANK repeats). Ubiquitous. Highest levels where found in placenta.

It is found in the cell membrane. Its subcellular location is the synapse. The protein localises to the synaptosome. Essential component of the high affinity receptor for the general membrane fusion machinery and an important regulator of transport vesicle docking and fusion. This is Synaptosomal-associated protein 23 (SNAP23) from Homo sapiens (Human).